The sequence spans 566 residues: MRRQWGSAMRAAEQAGCMVSASRAGQPEAGPWSCSGVILSRSPGLVLCHGGIFVPFLRAGSEVLTAAGAVFLPGDSCRDDLRLHVQWAPTAAGPGGGAERGRPGLCTPQCASLEPGPPAPSRGRPLQPRLPAELLLLLSCPAFWAHFARLFGDEAAEQWRFSSAARDDEVSEDEEADQLRALGWFALLGVRLGQEEVEEERGPAMAVSPLGAVPKGAPLLVCGSPFGAFCPDIFLNTLSCGVLSNVAGPLLLTDARCLPGTEGGGVFTARPAGALVALVVAPLCWKAGEWVGFTLLCAAAPLFRAARDALHRLPHSTAALAALLPPEVGVPWGLPLRDSGPLWAAAAVLVECGTVWGSGVAVAPRLVVTCRHVSPREAARVLVRSTTPKSVAIWGRVVFATQETCPYDIAVVSLEEDLDDVPIPVPAEHFHEGEAVSVVGFGVFGQSCGPSVTSGILSAVVQVNGTPVMLQTTCAVHSGSSGGPLFSNHSGNLLGIITSNTRDNNTGATYPHLNFSIPITVLQPALQQYSQTQDLGGLRELDRAAEPVRVVWRLQRPLAEAPRSKL.

The tract at residues 319–531 (ALAALLPPEV…LQPALQQYSQ (213 aa)) is serine protease. Residues histidine 372, aspartate 408, and serine 481 each act as charge relay system in the active site.

The protein belongs to the peptidase S1B family. In terms of assembly, homodimer. Forms a heterodimer with the C-terminal cleavage product (45 kDa form). Forms a heterodimer with the N-terminal cleavage product (15 kDa form). Interacts with PEX5. Interacts with LONP2. Post-translationally, self-cleavage gives rise to an N-terminal 15-kDa fragment and C-terminal 45-kDa fragment upon import into the peroxisomes. The full-lengh TYSND1 is the active the proteolytic processing of PTS1- and PTS2-proteins and in self-cleavage, and intermolecular self-cleavage of TYSND1 down-regulates its protease activity.

It localises to the peroxisome. Functionally, peroxisomal protease that mediates both the removal of the leader peptide from proteins containing a PTS2 target sequence and processes several PTS1-containing proteins. Catalyzes the processing of PTS1-proteins involved in the peroxisomal beta-oxidation of fatty acids. This Homo sapiens (Human) protein is Peroxisomal leader peptide-processing protease (TYSND1).